We begin with the raw amino-acid sequence, 664 residues long: Exoribonuclease 2 (664 aa).

The 329-residue stretch at 193 to 521 (RIDMTHIPFV…INHRMLKALI (329 aa)) folds into the RNB domain. An S1 motif domain is found at 568-650 (QTLFTGEIFD…ENRSLVAKPT (83 aa)).

The protein belongs to the RNR ribonuclease family. RNase II subfamily.

The protein resides in the cytoplasm. It carries out the reaction Exonucleolytic cleavage in the 3'- to 5'-direction to yield nucleoside 5'-phosphates.. Involved in mRNA degradation. Hydrolyzes single-stranded polyribonucleotides processively in the 3' to 5' direction. In Vibrio vulnificus (strain CMCP6), this protein is Exoribonuclease 2.